Reading from the N-terminus, the 723-residue chain is MDIISTTFDQINTHIKFTNQKKIEFQNHIEKEWEIITQLESNEQFTVYMSKKLKGPNFTNNRFGLCTVKKIKSQYFNENEILNHIKLRDNKYVLKYYGCGKDNNQDVYIYLEFIEYSIPISKVKLIPNDSSIDNFNNVSNTIIELVTCKLVESLNCIHKDNKIVHGNIKGENILLVNDESEYGFSVKFINFSLNIGYEDSIHLDMFNLGCVLIQMLGCDCTKDENIDFLFSKIPNHLVEKFKKVISQLLSKNINNQILTDIISNKITTSLPKYSTLIGEPNDGLIYIGIQNNSDGLILPLFNQPICKKTFTYGVYYLSLSSFHRQLNVGVIPESIHTLELASFNQTILPGVIPTSVRTLKLPSYNKTLTQGSIPKGVRTLLLSSFNQPLTTDIIPKTVTILKLQSFNQPIEWGALPCSLVELSLASYKQPLQWGVIPYYISTLELPLASAPFSEGSIPSGVSKLIQQGEIQQINKPIKINNENNQNYMSCSQNEFDSKLTLILNSKITRESLFFGLKYLELSTFNQSFETLPIPETVEYLKLPMYNQPLTPKLLPSGIKFLILPSFNHPIRGESIPPSVIHLVFNKLFSVIESIPSSVKYLDLGDEYYVYPGHLLHSVLSFRSGLKFRVTDPIPYSQSLTNLNLYNFNIELLKNGISSNVTSLTLGSNFTNIESLSNLPSSVTNLSFGITTLNEKAISDITKYVKSTVTTITVNNEQIRKKIN.

Positions W33 to L276 constitute a Protein kinase domain. FNIP repeat units follow at residues F301–S342, F343–S384, F385–S426, F524–S565, F566–E606, and F647–T690.

Belongs to the protein kinase superfamily. STE Ser/Thr protein kinase family.

The chain is Probable inactive serine/threonine-protein kinase fnkD (fnkD-1) from Dictyostelium discoideum (Social amoeba).